The chain runs to 444 residues: Phosphoglucosamine mutase (444 aa).

Ser102 (phosphoserine intermediate) is an active-site residue. Residues Ser102, Asp241, Asp243, and Asp245 each contribute to the Mg(2+) site. Ser102 carries the phosphoserine modification.

It belongs to the phosphohexose mutase family. The cofactor is Mg(2+). In terms of processing, activated by phosphorylation.

The enzyme catalyses alpha-D-glucosamine 1-phosphate = D-glucosamine 6-phosphate. Catalyzes the conversion of glucosamine-6-phosphate to glucosamine-1-phosphate. This Actinobacillus pleuropneumoniae serotype 7 (strain AP76) protein is Phosphoglucosamine mutase.